A 284-amino-acid polypeptide reads, in one-letter code: Lipoyl synthase (284 aa).

[4Fe-4S] cluster is bound by residues Cys34, Cys39, Cys45, Cys60, Cys64, Cys67, and Ser272. One can recognise a Radical SAM core domain in the interval 46–261 (FARRTATFMI…EEIGYKLGFK (216 aa)).

The protein belongs to the radical SAM superfamily. Lipoyl synthase family. [4Fe-4S] cluster serves as cofactor.

The protein localises to the cytoplasm. The enzyme catalyses [[Fe-S] cluster scaffold protein carrying a second [4Fe-4S](2+) cluster] + N(6)-octanoyl-L-lysyl-[protein] + 2 oxidized [2Fe-2S]-[ferredoxin] + 2 S-adenosyl-L-methionine + 4 H(+) = [[Fe-S] cluster scaffold protein] + N(6)-[(R)-dihydrolipoyl]-L-lysyl-[protein] + 4 Fe(3+) + 2 hydrogen sulfide + 2 5'-deoxyadenosine + 2 L-methionine + 2 reduced [2Fe-2S]-[ferredoxin]. The protein operates within protein modification; protein lipoylation via endogenous pathway; protein N(6)-(lipoyl)lysine from octanoyl-[acyl-carrier-protein]: step 2/2. Its function is as follows. Catalyzes the radical-mediated insertion of two sulfur atoms into the C-6 and C-8 positions of the octanoyl moiety bound to the lipoyl domains of lipoate-dependent enzymes, thereby converting the octanoylated domains into lipoylated derivatives. In Caldanaerobacter subterraneus subsp. tengcongensis (strain DSM 15242 / JCM 11007 / NBRC 100824 / MB4) (Thermoanaerobacter tengcongensis), this protein is Lipoyl synthase.